We begin with the raw amino-acid sequence, 396 residues long: Phosphoglycerate kinase (396 aa).

Substrate contacts are provided by residues 21 to 23 (DFN), R36, 59 to 62 (HLGK), R119, and R156. ATP contacts are provided by residues K206, G294, E325, and 352 to 355 (GGDS).

The protein belongs to the phosphoglycerate kinase family. Monomer.

It is found in the cytoplasm. It carries out the reaction (2R)-3-phosphoglycerate + ATP = (2R)-3-phospho-glyceroyl phosphate + ADP. Its pathway is carbohydrate degradation; glycolysis; pyruvate from D-glyceraldehyde 3-phosphate: step 2/5. The chain is Phosphoglycerate kinase from Listeria innocua serovar 6a (strain ATCC BAA-680 / CLIP 11262).